The primary structure comprises 344 residues: Phosphate acyltransferase (344 aa).

It belongs to the PlsX family. As to quaternary structure, homodimer. Probably interacts with PlsY.

The protein resides in the cytoplasm. The catalysed reaction is a fatty acyl-[ACP] + phosphate = an acyl phosphate + holo-[ACP]. It participates in lipid metabolism; phospholipid metabolism. In terms of biological role, catalyzes the reversible formation of acyl-phosphate (acyl-PO(4)) from acyl-[acyl-carrier-protein] (acyl-ACP). This enzyme utilizes acyl-ACP as fatty acyl donor, but not acyl-CoA. This chain is Phosphate acyltransferase, found in Cronobacter sakazakii (strain ATCC BAA-894) (Enterobacter sakazakii).